The sequence spans 588 residues: DNA ligase (588 aa).

Position 250 (Glu250) interacts with ATP. The active-site N6-AMP-lysine intermediate is the Lys252. The ATP site is built by Arg257, Arg272, Glu302, Phe342, Arg417, and Lys423.

It belongs to the ATP-dependent DNA ligase family. It depends on Mg(2+) as a cofactor.

It carries out the reaction ATP + (deoxyribonucleotide)n-3'-hydroxyl + 5'-phospho-(deoxyribonucleotide)m = (deoxyribonucleotide)n+m + AMP + diphosphate.. Functionally, DNA ligase that seals nicks in double-stranded DNA during DNA replication, DNA recombination and DNA repair. The polypeptide is DNA ligase (Nitrosopumilus maritimus (strain SCM1)).